The sequence spans 228 residues: Small ribosomal subunit protein uS7A (228 aa).

Belongs to the universal ribosomal protein uS7 family.

The sequence is that of Small ribosomal subunit protein uS7A (RpS5a) from Drosophila melanogaster (Fruit fly).